The following is a 363-amino-acid chain: GTP-binding protein 1 (363 aa).

The OBG-type G domain occupies 63–287 (ARVAFIGFPS…LKERIWEELN (225 aa)). GTP-binding positions include 69 to 76 (GFPSVGKS), 115 to 119 (DLPGI), and 246 to 249 (KIDA). One can recognise a TGS domain in the interval 287–362 (NLYRIYTKRK…EEGDVVTIVT (76 aa)).

Belongs to the TRAFAC class OBG-HflX-like GTPase superfamily. OBG GTPase family.

The sequence is that of GTP-binding protein 1 (gtp1) from Schizosaccharomyces pombe (strain 972 / ATCC 24843) (Fission yeast).